The primary structure comprises 218 residues: ATP phosphoribosyltransferase (218 aa).

Belongs to the ATP phosphoribosyltransferase family. Short subfamily. Heteromultimer composed of HisG and HisZ subunits.

The protein localises to the cytoplasm. It carries out the reaction 1-(5-phospho-beta-D-ribosyl)-ATP + diphosphate = 5-phospho-alpha-D-ribose 1-diphosphate + ATP. The protein operates within amino-acid biosynthesis; L-histidine biosynthesis; L-histidine from 5-phospho-alpha-D-ribose 1-diphosphate: step 1/9. In terms of biological role, catalyzes the condensation of ATP and 5-phosphoribose 1-diphosphate to form N'-(5'-phosphoribosyl)-ATP (PR-ATP). Has a crucial role in the pathway because the rate of histidine biosynthesis seems to be controlled primarily by regulation of HisG enzymatic activity. This is ATP phosphoribosyltransferase from Acaryochloris marina (strain MBIC 11017).